Consider the following 454-residue polypeptide: tRNA modification GTPase MnmE (454 aa).

Arg-23, Glu-80, and Lys-120 together coordinate (6S)-5-formyl-5,6,7,8-tetrahydrofolate. Positions 216-377 (GMKVVIAGRP…LRDHLKQSMG (162 aa)) constitute a TrmE-type G domain. Asn-226 provides a ligand contact to K(+). Residues 226–231 (NAGKSS), 245–251 (TDIAGTT), 270–273 (DTAG), 335–338 (NKAD), and 358–360 (SAR) each bind GTP. Ser-230 serves as a coordination point for Mg(2+). K(+)-binding residues include Thr-245, Ile-247, and Thr-250. Thr-251 contributes to the Mg(2+) binding site. Residue Lys-454 coordinates (6S)-5-formyl-5,6,7,8-tetrahydrofolate.

Belongs to the TRAFAC class TrmE-Era-EngA-EngB-Septin-like GTPase superfamily. TrmE GTPase family. As to quaternary structure, homodimer. Heterotetramer of two MnmE and two MnmG subunits. K(+) serves as cofactor.

Its subcellular location is the cytoplasm. Exhibits a very high intrinsic GTPase hydrolysis rate. Involved in the addition of a carboxymethylaminomethyl (cmnm) group at the wobble position (U34) of certain tRNAs, forming tRNA-cmnm(5)s(2)U34. This Serratia proteamaculans (strain 568) protein is tRNA modification GTPase MnmE.